The following is a 352-amino-acid chain: Holliday junction branch migration complex subunit RuvB (352 aa).

The large ATPase domain (RuvB-L) stretch occupies residues 4–185; that stretch reads PDRLISAVSG…FGIVQRLEFY (182 aa). ATP is bound by residues Ile-24, Arg-25, Gly-66, Lys-69, Thr-70, Thr-71, 132–134, Arg-175, Tyr-185, and Arg-222; that span reads EDF. Position 70 (Thr-70) interacts with Mg(2+). Positions 186 to 256 are small ATPAse domain (RuvB-S); it reads NVEDLATIVS…IADKALNLLD (71 aa). A head domain (RuvB-H) region spans residues 259-352; the sequence is ERGFDHLDRR…SDLFTSEDGN (94 aa). Arg-295, Arg-314, and Arg-319 together coordinate DNA.

Belongs to the RuvB family. As to quaternary structure, homohexamer. Forms an RuvA(8)-RuvB(12)-Holliday junction (HJ) complex. HJ DNA is sandwiched between 2 RuvA tetramers; dsDNA enters through RuvA and exits via RuvB. An RuvB hexamer assembles on each DNA strand where it exits the tetramer. Each RuvB hexamer is contacted by two RuvA subunits (via domain III) on 2 adjacent RuvB subunits; this complex drives branch migration. In the full resolvosome a probable DNA-RuvA(4)-RuvB(12)-RuvC(2) complex forms which resolves the HJ.

The protein localises to the cytoplasm. The enzyme catalyses ATP + H2O = ADP + phosphate + H(+). In terms of biological role, the RuvA-RuvB-RuvC complex processes Holliday junction (HJ) DNA during genetic recombination and DNA repair, while the RuvA-RuvB complex plays an important role in the rescue of blocked DNA replication forks via replication fork reversal (RFR). RuvA specifically binds to HJ cruciform DNA, conferring on it an open structure. The RuvB hexamer acts as an ATP-dependent pump, pulling dsDNA into and through the RuvAB complex. RuvB forms 2 homohexamers on either side of HJ DNA bound by 1 or 2 RuvA tetramers; 4 subunits per hexamer contact DNA at a time. Coordinated motions by a converter formed by DNA-disengaged RuvB subunits stimulates ATP hydrolysis and nucleotide exchange. Immobilization of the converter enables RuvB to convert the ATP-contained energy into a lever motion, pulling 2 nucleotides of DNA out of the RuvA tetramer per ATP hydrolyzed, thus driving DNA branch migration. The RuvB motors rotate together with the DNA substrate, which together with the progressing nucleotide cycle form the mechanistic basis for DNA recombination by continuous HJ branch migration. Branch migration allows RuvC to scan DNA until it finds its consensus sequence, where it cleaves and resolves cruciform DNA. This is Holliday junction branch migration complex subunit RuvB from Pseudomonas paraeruginosa (strain DSM 24068 / PA7) (Pseudomonas aeruginosa (strain PA7)).